The sequence spans 167 residues: Ammonium/H(+) antiporter subunit AmhM (167 aa).

One can recognise an RCK C-terminal domain in the interval 79–163 (IDRIKLIRKQ…IQKFEELCAC (85 aa)).

In terms of assembly, interacts with AmhT.

It is found in the cell membrane. Its function is as follows. Modulates the activity of the ammonium/proton antiporter AmhT. This chain is Ammonium/H(+) antiporter subunit AmhM (amhM), found in Alkalihalophilus pseudofirmus (strain ATCC BAA-2126 / JCM 17055 / OF4) (Bacillus pseudofirmus).